We begin with the raw amino-acid sequence, 630 residues long: Chaperone protein DnaK (630 aa).

Thr-197 is modified (phosphothreonine; by autocatalysis). A compositionally biased stretch (polar residues) spans Lys-604–Asn-618. A disordered region spans residues Lys-604–Lys-630. Positions Glu-619–Lys-630 are enriched in basic and acidic residues.

It belongs to the heat shock protein 70 family.

Acts as a chaperone. This is Chaperone protein DnaK from Karelsulcia muelleri (strain GWSS) (Sulcia muelleri).